We begin with the raw amino-acid sequence, 235 residues long: Transcription factor MYB59 (235 aa).

HTH myb-type domains are found at residues 5–57 (QEEY…VNYL) and 58–112 (HPGL…RKKA). The H-T-H motif DNA-binding region spans 33-57 (WDFVAKVSGLNRTGKSCRLRWVNYL). A Bipartite nuclear localization signal 1 motif is present at residues 62 to 65 (KRGK). The H-T-H motif DNA-binding region spans 85-108 (WSKIARKLPGRTDNEIKNYWRTHM). The short motif at 109 to 117 (RKKAQEKKR) is the Bipartite nuclear localization signal 2 element. Residues 109–147 (RKKAQEKKRPMSPTSSSSNCCSSSMTTTTSQDTGGSNGK) are disordered. Positions 119 to 138 (MSPTSSSSNCCSSSMTTTTS) are enriched in low complexity.

In terms of tissue distribution, mainly expressed in leaves and seedlings, and to a lower extent, in roots, stems and inflorescences. Isoform MYB59-1 and isoform MYB59-2 are present in roots, leaves, and seedlings, while the expression of isoform MYB59-3 and isoform MYB59-4 is confined to seedlings.

Its subcellular location is the nucleus. Functionally, transcription factor. The chain is Transcription factor MYB59 (MYB59) from Arabidopsis thaliana (Mouse-ear cress).